We begin with the raw amino-acid sequence, 357 residues long: Fructose-1,6-bisphosphatase class 1 3 (357 aa).

E94, D116, L118, and D119 together coordinate Mg(2+). Residues 119 to 122 and N211 each bind substrate; that span reads DGSS. Residue E283 coordinates Mg(2+).

This sequence belongs to the FBPase class 1 family. As to quaternary structure, homotetramer. The cofactor is Mg(2+).

The protein resides in the cytoplasm. The enzyme catalyses beta-D-fructose 1,6-bisphosphate + H2O = beta-D-fructose 6-phosphate + phosphate. Its pathway is carbohydrate biosynthesis; Calvin cycle. In Methylibium petroleiphilum (strain ATCC BAA-1232 / LMG 22953 / PM1), this protein is Fructose-1,6-bisphosphatase class 1 3.